Here is a 134-residue protein sequence, read N- to C-terminus: Small ribosomal subunit protein uS8c (134 aa).

The protein belongs to the universal ribosomal protein uS8 family. As to quaternary structure, part of the 30S ribosomal subunit.

It is found in the plastid. It localises to the chloroplast. Its function is as follows. One of the primary rRNA binding proteins, it binds directly to 16S rRNA central domain where it helps coordinate assembly of the platform of the 30S subunit. This chain is Small ribosomal subunit protein uS8c (rps8), found in Lotus japonicus (Lotus corniculatus var. japonicus).